Consider the following 486-residue polypeptide: Probable glycine dehydrogenase (decarboxylating) subunit 2 (486 aa).

The tract at residues 1–26 (MLIFESSRPGRQARAQAPKPTAATND) is disordered. Residue K264 is modified to N6-(pyridoxal phosphate)lysine.

The protein belongs to the GcvP family. C-terminal subunit subfamily. In terms of assembly, the glycine cleavage system is composed of four proteins: P, T, L and H. In this organism, the P 'protein' is a heterodimer of two subunits. Requires pyridoxal 5'-phosphate as cofactor.

It carries out the reaction N(6)-[(R)-lipoyl]-L-lysyl-[glycine-cleavage complex H protein] + glycine + H(+) = N(6)-[(R)-S(8)-aminomethyldihydrolipoyl]-L-lysyl-[glycine-cleavage complex H protein] + CO2. In terms of biological role, the glycine cleavage system catalyzes the degradation of glycine. The P protein binds the alpha-amino group of glycine through its pyridoxal phosphate cofactor; CO(2) is released and the remaining methylamine moiety is then transferred to the lipoamide cofactor of the H protein. The polypeptide is Probable glycine dehydrogenase (decarboxylating) subunit 2 (Nitrosococcus oceani (strain ATCC 19707 / BCRC 17464 / JCM 30415 / NCIMB 11848 / C-107)).